The sequence spans 890 residues: Alanine--tRNA ligase (890 aa).

Positions 567, 571, 680, and 684 each coordinate Zn(2+).

This sequence belongs to the class-II aminoacyl-tRNA synthetase family. It depends on Zn(2+) as a cofactor.

The protein localises to the cytoplasm. The enzyme catalyses tRNA(Ala) + L-alanine + ATP = L-alanyl-tRNA(Ala) + AMP + diphosphate. Catalyzes the attachment of alanine to tRNA(Ala) in a two-step reaction: alanine is first activated by ATP to form Ala-AMP and then transferred to the acceptor end of tRNA(Ala). Also edits incorrectly charged Ser-tRNA(Ala) and Gly-tRNA(Ala) via its editing domain. This chain is Alanine--tRNA ligase, found in Ruegeria pomeroyi (strain ATCC 700808 / DSM 15171 / DSS-3) (Silicibacter pomeroyi).